Reading from the N-terminus, the 211-residue chain is Envelope glycoprotein (211 aa).

Over Q1–L151 the chain is Extracellular. The segment at V13–V33 is fusion peptide. 2 coiled-coil regions span residues V41–L90 and K100–G136. Positions L79–L95 are immunosuppression. A CX6CC motif is present at residues C96–C104. A helical transmembrane segment spans residues I152–I172. C171 carries the S-palmitoyl cysteine; by host lipid modification. Topologically, residues L173 to E211 are cytoplasmic. The short motif at Y196–L199 is the YXXL motif; contains endocytosis signal element.

The mature envelope protein (Env) consists of a trimer of SU-TM heterodimers attached by a labile interchain disulfide bond. Specific enzymatic cleavages in vivo yield mature proteins. Envelope glycoproteins are synthesized as an inactive precursor that is N-glycosylated and processed likely by host cell furin or by a furin-like protease in the Golgi to yield the mature SU and TM proteins. The cleavage site between SU and TM requires the minimal sequence [KR]-X-[KR]-R. The R-peptide is released from the C-terminus of the cytoplasmic tail of the TM protein upon particle formation as a result of proteolytic cleavage by the viral protease. Cleavage of this peptide is required for TM to become fusogenic. Post-translationally, the CXXC motif is highly conserved across a broad range of retroviral envelope proteins. It is thought to participate in the formation of a labile disulfide bond possibly with the CX6CC motif present in the transmembrane protein. Isomerization of the intersubunit disulfide bond to an SU intrachain disulfide bond is thought to occur upon receptor recognition in order to allow membrane fusion. In terms of processing, the transmembrane protein is palmitoylated. The R-peptide is palmitoylated.

It localises to the virion membrane. Its subcellular location is the host cell membrane. In terms of biological role, the surface protein (SU) attaches the virus to the host cell by binding to its receptor. This interaction triggers the refolding of the transmembrane protein (TM) and is thought to activate its fusogenic potential by unmasking its fusion peptide. Fusion occurs at the host cell plasma membrane. The transmembrane protein (TM) acts as a class I viral fusion protein. Under the current model, the protein has at least 3 conformational states: pre-fusion native state, pre-hairpin intermediate state, and post-fusion hairpin state. During viral and target cell membrane fusion, the coiled coil regions (heptad repeats) assume a trimer-of-hairpins structure, positioning the fusion peptide in close proximity to the C-terminal region of the ectodomain. The formation of this structure appears to drive apposition and subsequent fusion of viral and target cell membranes. Membranes fusion leads to delivery of the nucleocapsid into the cytoplasm. The polypeptide is Envelope glycoprotein (env) (Mus musculus (Mouse)).